Reading from the N-terminus, the 410-residue chain is Imidazolonepropionase (410 aa).

Residues His-73 and His-75 each contribute to the Fe(3+) site. Positions 73 and 75 each coordinate Zn(2+). The 4-imidazolone-5-propanoate site is built by Arg-82, Tyr-145, and His-178. Position 145 (Tyr-145) interacts with N-formimidoyl-L-glutamate. Fe(3+) is bound at residue His-243. His-243 is a Zn(2+) binding site. Residue Gln-246 coordinates 4-imidazolone-5-propanoate. Asp-318 is a Fe(3+) binding site. Asp-318 contributes to the Zn(2+) binding site. Asn-320 and Gly-322 together coordinate N-formimidoyl-L-glutamate. Ser-323 contributes to the 4-imidazolone-5-propanoate binding site.

It belongs to the metallo-dependent hydrolases superfamily. HutI family. It depends on Zn(2+) as a cofactor. Fe(3+) is required as a cofactor.

It localises to the cytoplasm. It carries out the reaction 4-imidazolone-5-propanoate + H2O = N-formimidoyl-L-glutamate. It functions in the pathway amino-acid degradation; L-histidine degradation into L-glutamate; N-formimidoyl-L-glutamate from L-histidine: step 3/3. Catalyzes the hydrolytic cleavage of the carbon-nitrogen bond in imidazolone-5-propanoate to yield N-formimidoyl-L-glutamate. It is the third step in the universal histidine degradation pathway. The chain is Imidazolonepropionase from Shewanella frigidimarina (strain NCIMB 400).